The chain runs to 1814 residues: U3 small nucleolar RNA-associated protein 10 (1814 aa).

Residues 583-620 form an HEAT 1 repeat; that stretch reads LDFQALLPFLLVALTDASERVRREAAAALAAVGSLYKK. 2 consecutive transmembrane segments (helical) span residues 942–962 and 998–1018; these read IQSG…AIVN and ALLL…HSVM. HEAT repeat units follow at residues 1042 to 1079, 1249 to 1286, 1293 to 1331, and 1770 to 1807; these read QTID…AFEH, LTLV…QNPE, IRVL…KYGK, and ALLP…VLGE.

Belongs to the HEATR1/UTP10 family. Component of the ribosomal small subunit (SSU) processome.

Its subcellular location is the nucleus. It localises to the nucleolus. It is found in the membrane. Functionally, involved in nucleolar processing of pre-18S ribosomal RNA. Involved in ribosome biosynthesis. The protein is U3 small nucleolar RNA-associated protein 10 of Neosartorya fischeri (strain ATCC 1020 / DSM 3700 / CBS 544.65 / FGSC A1164 / JCM 1740 / NRRL 181 / WB 181) (Aspergillus fischerianus).